Here is a 240-residue protein sequence, read N- to C-terminus: Small ribosomal subunit protein uS3 (240 aa).

The 71-residue stretch at 39–109 (IRQYIEKTLN…QIRVNVIEVP (71 aa)) folds into the KH type-2 domain. The interval 219 to 240 (APPSQPRRKSRRQQFDDRSQDG) is disordered. Residues 231–240 (QQFDDRSQDG) are compositionally biased toward basic and acidic residues.

Belongs to the universal ribosomal protein uS3 family. In terms of assembly, part of the 30S ribosomal subunit. Forms a tight complex with proteins S10 and S14.

In terms of biological role, binds the lower part of the 30S subunit head. Binds mRNA in the 70S ribosome, positioning it for translation. This Synechocystis sp. (strain ATCC 27184 / PCC 6803 / Kazusa) protein is Small ribosomal subunit protein uS3.